A 272-amino-acid polypeptide reads, in one-letter code: Ribonuclease HII (272 aa).

The 192-residue stretch at 30 to 221 folds into the RNase H type-2 domain; sequence GPVAGVDEVG…VRRAAEATGV (192 aa). A divalent metal cation is bound by residues D36, E37, and D130.

The protein belongs to the RNase HII family. Mn(2+) is required as a cofactor. It depends on Mg(2+) as a cofactor.

The protein localises to the cytoplasm. The catalysed reaction is Endonucleolytic cleavage to 5'-phosphomonoester.. In terms of biological role, endonuclease that specifically degrades the RNA of RNA-DNA hybrids. The polypeptide is Ribonuclease HII (Mycolicibacterium smegmatis (strain ATCC 700084 / mc(2)155) (Mycobacterium smegmatis)).